Consider the following 281-residue polypeptide: MNLRFTKMHGLGNDFMVIDGIRQSLPETGLPLPADEIRRLADRKFGVGFDQMLIVQPAQGDADFRYRILNADGSEVSQCGNGARCFARFVREQGLTDKKSIRVETAAGQMTLSVTDDDQITVDMGAPRWAPDAIPMTAKAEADNYFLVSGTQAWDVGAVGLGNPHCTLLVENVDTAPVDTVGPLLESHEQFPERANVGFMQIVSRNEIRLRVYERGAGETLACGSGACAAVVIGQRRDWLDDTVTVHLPGGTLHVCYDGQGGIQMTGPASHVYDGAIEIAL.

Substrate is bound by residues asparagine 13, glutamine 51, and asparagine 70. Cysteine 79 acts as the Proton donor in catalysis. Substrate is bound by residues 80–81, asparagine 163, asparagine 196, and 214–215; these read GN and ER. Residue cysteine 223 is the Proton acceptor of the active site. Residue 224-225 participates in substrate binding; the sequence is GS.

Belongs to the diaminopimelate epimerase family. In terms of assembly, homodimer.

The protein resides in the cytoplasm. The catalysed reaction is (2S,6S)-2,6-diaminopimelate = meso-2,6-diaminopimelate. The protein operates within amino-acid biosynthesis; L-lysine biosynthesis via DAP pathway; DL-2,6-diaminopimelate from LL-2,6-diaminopimelate: step 1/1. Its function is as follows. Catalyzes the stereoinversion of LL-2,6-diaminopimelate (L,L-DAP) to meso-diaminopimelate (meso-DAP), a precursor of L-lysine and an essential component of the bacterial peptidoglycan. The chain is Diaminopimelate epimerase from Alcanivorax borkumensis (strain ATCC 700651 / DSM 11573 / NCIMB 13689 / SK2).